The primary structure comprises 408 residues: MSLSVTRENFDEWMVPVYVPAPFIPVRGEGSRLWDQQGKEYIDFAGGIAVNALGHAHPALREALNEQANRFWHTGNGYTNEPALRLAKKLIDATFAERVFFCNSGAEANEAALKLARKYAHDRVGNHKSGIVAFKNAFHGRTLFTVSAGGQPTYSQDFAPLPPDIRHAAYNDLNSASALIDDNTCAVIVEPVQGEGGVIPATKAFLQGLRELCDRHQALLIFDEVQTGVGRTGELYAYMHYGVTPDILTTAKALGGGFPIGAMLTTQDYASVMTPGTHGTTYGGNPLATAVAGKVLDIINTPEMQNGVRQRHDAFIERLNTINVRFGMFSEIRGLGLLLGCVLQTEFAGKAKLIAQEAAKAGVMVLIAGGDVVRFAPALNVSDEEIATGLDRFALACERLQTGGASCG.

Position 252 is an N6-(pyridoxal phosphate)lysine (lysine 252).

The protein belongs to the class-III pyridoxal-phosphate-dependent aminotransferase family. AstC subfamily. It depends on pyridoxal 5'-phosphate as a cofactor.

It catalyses the reaction N(2)-succinyl-L-ornithine + 2-oxoglutarate = N-succinyl-L-glutamate 5-semialdehyde + L-glutamate. The protein operates within amino-acid degradation; L-arginine degradation via AST pathway; L-glutamate and succinate from L-arginine: step 3/5. Catalyzes the transamination of N(2)-succinylornithine and alpha-ketoglutarate into N(2)-succinylglutamate semialdehyde and glutamate. Can also act as an acetylornithine aminotransferase. The protein is Succinylornithine transaminase of Salmonella heidelberg (strain SL476).